Here is a 151-residue protein sequence, read N- to C-terminus: 3-hydroxyacyl-[acyl-carrier-protein] dehydratase FabZ (151 aa).

His-54 is an active-site residue.

It belongs to the thioester dehydratase family. FabZ subfamily.

It is found in the cytoplasm. It catalyses the reaction a (3R)-hydroxyacyl-[ACP] = a (2E)-enoyl-[ACP] + H2O. In terms of biological role, involved in unsaturated fatty acids biosynthesis. Catalyzes the dehydration of short chain beta-hydroxyacyl-ACPs and long chain saturated and unsaturated beta-hydroxyacyl-ACPs. The protein is 3-hydroxyacyl-[acyl-carrier-protein] dehydratase FabZ of Blochmanniella pennsylvanica (strain BPEN).